A 505-amino-acid chain; its full sequence is Calcium/calmodulin-dependent protein kinase kinase 1 (505 aa).

Residues 26 to 61 (THLEEADGGPEPTRNGVDPPPRARAASVIPGSTSRL) form a disordered region. A phosphoserine mark is found at S67 and S74. The residue at position 78 (R78) is an Asymmetric dimethylarginine. Phosphoserine is present on S100. Phosphothreonine is present on T108. A Protein kinase domain is found at 128-409 (YKLQSEIGKG…VPDIKLHPWV (282 aa)). ATP-binding positions include 134–142 (IGKGAYGVV) and K157. An RP domain region spans residues 167–189 (QYGFPRRPPPRGSQAAQGGPAKQ). Residue D275 is the Proton acceptor of the active site. An autoinhibitory domain region spans residues 435-440 (KNSVRL). Residues 438–463 (VRLIPSWTTVILVKSMLRKRSFGNPF) are calmodulin-binding. S458, S475, and S492 each carry phosphoserine. The disordered stretch occupies residues 460-505 (GNPFEPQARREERSMSAPGNLLVKEGFGEGGKSPELPGVQEDEAAS).

It belongs to the protein kinase superfamily. Ser/Thr protein kinase family. Interacts with CAMK4 and calmodulin. Appears to be autophosphorylated in a Ca(2+)/calmodulin-dependent manner. Phosphorylated at multiple sites by PRCAKA/PKA. Phosphorylation of Ser-458 is blocked upon binding to Ca(2+)/calmodulin. In vitro, phosphorylated by CAMK1 and CAMK4.

The protein localises to the cytoplasm. It localises to the nucleus. The catalysed reaction is L-seryl-[protein] + ATP = O-phospho-L-seryl-[protein] + ADP + H(+). It catalyses the reaction L-threonyl-[protein] + ATP = O-phospho-L-threonyl-[protein] + ADP + H(+). Its activity is regulated as follows. Activated by Ca(2+)/calmodulin. Binding of calmodulin may relieve intrasteric autoinhibition. Partially inhibited upon phosphorylation by PRCAKA/PKA. May be regulated through phosphorylation by CAMK1 and CAMK4. Functionally, calcium/calmodulin-dependent protein kinase that belongs to a proposed calcium-triggered signaling cascade involved in a number of cellular processes. Phosphorylates CAMK1, CAMK1D, CAMK1G and CAMK4. Involved in regulating cell apoptosis. Promotes cell survival by phosphorylating AKT1/PKB that inhibits pro-apoptotic BAD/Bcl2-antagonist of cell death. In Homo sapiens (Human), this protein is Calcium/calmodulin-dependent protein kinase kinase 1 (CAMKK1).